A 552-amino-acid polypeptide reads, in one-letter code: Scaffold protein (552 aa).

This sequence belongs to the poxviridae protein D13 family. Homotrimer. Self-assembles to form a layer. Interacts with A17 (via N-terminus); this interaction is necessary for D13 association with membranes.

The protein resides in the membrane. Its function is as follows. Scaffold protein which forms a transitory spherical honeycomb lattice providing curvature and rigidity to the convex membrane of crescent and immature virions (IV). This association occurs concomitantly with viral membrane formation. Targeted by the drug rifampicin, which prevents the formation of this lattice, and hence virus morphogenesis. In the presence of rifampicin, irregularly shaped membranes that lack the honeycomb layer accumulate around areas of electron-dense viroplasm. This layer is lost from virions during maturation from IV to mature virion (MV), through the proteolysis of A17 N-terminus. This chain is Scaffold protein, found in Vertebrata (FPV).